An 82-amino-acid chain; its full sequence is NAD(P)H-quinone oxidoreductase subunit O (82 aa).

This sequence belongs to the complex I NdhO subunit family. As to quaternary structure, NDH-1 can be composed of about 15 different subunits; different subcomplexes with different compositions have been identified which probably have different functions.

It is found in the cellular thylakoid membrane. The catalysed reaction is a plastoquinone + NADH + (n+1) H(+)(in) = a plastoquinol + NAD(+) + n H(+)(out). It catalyses the reaction a plastoquinone + NADPH + (n+1) H(+)(in) = a plastoquinol + NADP(+) + n H(+)(out). NDH-1 shuttles electrons from an unknown electron donor, via FMN and iron-sulfur (Fe-S) centers, to quinones in the respiratory and/or the photosynthetic chain. The immediate electron acceptor for the enzyme in this species is believed to be plastoquinone. Couples the redox reaction to proton translocation, and thus conserves the redox energy in a proton gradient. Cyanobacterial NDH-1 also plays a role in inorganic carbon-concentration. This chain is NAD(P)H-quinone oxidoreductase subunit O, found in Prochlorococcus marinus (strain MIT 9211).